Here is a 57-residue protein sequence, read N- to C-terminus: uncharacterized protein (57 aa).

This is an uncharacterized protein from Escherichia coli (strain K12).